A 278-amino-acid polypeptide reads, in one-letter code: Probable endonuclease 4 (278 aa).

Residues His-66, His-106, Glu-140, Asp-172, His-175, His-209, Asp-222, His-224, and Glu-254 each coordinate Zn(2+).

The protein belongs to the AP endonuclease 2 family. Zn(2+) is required as a cofactor.

The enzyme catalyses Endonucleolytic cleavage to 5'-phosphooligonucleotide end-products.. In terms of biological role, endonuclease IV plays a role in DNA repair. It cleaves phosphodiester bonds at apurinic or apyrimidinic (AP) sites, generating a 3'-hydroxyl group and a 5'-terminal sugar phosphate. The polypeptide is Probable endonuclease 4 (Haloquadratum walsbyi (strain DSM 16790 / HBSQ001)).